Here is a 732-residue protein sequence, read N- to C-terminus: Adducin-related protein 1 (732 aa).

Disordered regions lie at residues 1 to 22 (MIGR…DPEY) and 684 to 732 (TRFS…KKDK). Polar residues predominate over residues 685 to 705 (RFSSTQGTSEGNTTSRSCTTA). The span at 716-732 (KKKKKKGFLSFMRKKDK) shows a compositional bias: basic residues.

It belongs to the aldolase class II family. Adducin subfamily.

It localises to the cytoplasm. The protein resides in the cytoskeleton. It is found in the cell membrane. Functionally, membrane-cytoskeleton-associated protein that promotes the assembly of the spectrin-actin network. Plays a role in time-dependent memmory loss and the retention of conditioned behavior over time. This chain is Adducin-related protein 1, found in Caenorhabditis elegans.